A 400-amino-acid polypeptide reads, in one-letter code: Glycine betaine/proline betaine transport system ATP-binding protein ProV (400 aa).

An ABC transporter domain is found at 29-265; that stretch reads LSKEQILEKT…PANDYVRTFF (237 aa). 61 to 68 provides a ligand contact to ATP; the sequence is GLSGSGKS. 2 consecutive CBS domains span residues 282 to 341 and 343 to 400; these read RTPN…GLDA and LIDA…VNNG.

Belongs to the ABC transporter superfamily. As to quaternary structure, the complex is composed of two ATP-binding proteins (ProV), two transmembrane proteins (ProW) and a solute-binding protein (ProX).

The protein localises to the cell inner membrane. Its function is as follows. Part of the ProU ABC transporter complex involved in glycine betaine and proline betaine uptake. Probably responsible for energy coupling to the transport system. The chain is Glycine betaine/proline betaine transport system ATP-binding protein ProV from Escherichia coli (strain K12).